The chain runs to 201 residues: Retinol binding protein 4 (201 aa).

An N-terminal signal peptide occupies residues methionine 1–alanine 18. 3 disulfide bridges follow: cysteine 22/cysteine 178, cysteine 88/cysteine 192, and cysteine 138/cysteine 147. Substrate is bound at residue glutamine 116. Position 139 is an omega-N-methylarginine (arginine 139).

The protein belongs to the calycin superfamily. Lipocalin family. As to quaternary structure, interacts with TTR. Interaction with TTR prevents its loss by filtration through the kidney glomeruli. Interacts with STRA6. In terms of tissue distribution, highly expressed in liver. Also expressed in adipose tissue. Expressed by endometrium from days 16-25 and by unattached chorioallantois from days 30-36 during pregnancy.

Its subcellular location is the secreted. Functionally, retinol-binding protein that mediates retinol transport in blood plasma. Delivers retinol from the liver stores to the peripheral tissues. Transfers the bound all-trans retinol to STRA6, that then facilitates retinol transport across the cell membrane. The sequence is that of Retinol binding protein 4 from Felis catus (Cat).